Here is a 162-residue protein sequence, read N- to C-terminus: Caveolin-2 (162 aa).

Topologically, residues 1–86 (MGLETEKADV…FEISKYVMYK (86 aa)) are cytoplasmic. Phosphotyrosine; by SRC is present on tyrosine 19. Serine 20 and serine 23 each carry phosphoserine. At tyrosine 27 the chain carries Phosphotyrosine; by SRC. Residue serine 36 is modified to Phosphoserine. Positions 87–107 (FLTVFLAIPLAFIAGILFATL) form an intramembrane region, helical. Topologically, residues 108 to 162 (SCLHIWILMPFVKTCLMVLPSVQTIWKSVTDVFIAPLCTSVGRSFSSVSLQLSQD) are cytoplasmic.

It belongs to the caveolin family. In terms of assembly, monomer or homodimer. Interacts with CAV1; the interaction forms a stable heterooligomeric complex that is required for targeting to lipid rafts and for caveolae formation. Tyrosine phosphorylated forms do not form heterooligomers with the Tyr-19-phosphorylated form existing as a monomer or dimer, and the Tyr-27-form as a monomer only. Interacts (tyrosine phosphorylated form) with the SH2 domain-containing proteins, RASA1, NCK1 and SRC. Interacts (tyrosine phosphorylated form) with INSR, the interaction (Tyr-27-phosphorylated form) is increased on insulin stimulation. Interacts (Tyr-19 phosphorylated form) with MAPK1 (phosphorylated form); the interaction, promoted by insulin, leads to nuclear location and MAPK1 activation. Interacts with STAT3; the interaction is increased on insulin-induced tyrosine phosphorylation leading to STAT activation. In terms of processing, phosphorylated on serine and tyrosine residues. CAV1 promotes phosphorylation on Ser-23 which then targets the complex to the plasma membrane, lipid rafts and caveolae. Phosphorylation on Ser-36 appears to modulate mitosis in endothelial cells. Phosphorylation on both Tyr-19 and Tyr-27 is required for insulin-induced 'Ser-727' phosphorylation of STAT3 and its activation. Phosphorylation on Tyr-19 is required for insulin-induced phosphorylation of MAPK1 and DNA binding of STAT3. Tyrosine phosphorylation is induced by both EGF and insulin (By. similarity).

It localises to the nucleus. The protein resides in the cytoplasm. It is found in the golgi apparatus membrane. Its subcellular location is the cell membrane. The protein localises to the membrane. It localises to the caveola. In terms of biological role, may act as a scaffolding protein within caveolar membranes. Interacts directly with G-protein alpha subunits and can functionally regulate their activity. Acts as an accessory protein in conjunction with CAV1 in targeting to lipid rafts and driving caveolae formation. The Ser-36 phosphorylated form has a role in modulating mitosis in endothelial cells. Positive regulator of cellular mitogenesis of the MAPK signaling pathway. Required for the insulin-stimulated nuclear translocation and activation of MAPK1 and STAT3, and the subsequent regulation of cell cycle progression. In Chlorocebus aethiops (Green monkey), this protein is Caveolin-2 (CAV2).